Reading from the N-terminus, the 215-residue chain is 2-phospho-L-lactate guanylyltransferase (215 aa).

The protein belongs to the CofC family. As to quaternary structure, homodimer.

The catalysed reaction is (2S)-2-phospholactate + GTP + H(+) = (2S)-lactyl-2-diphospho-5'-guanosine + diphosphate. It participates in cofactor biosynthesis; coenzyme F420 biosynthesis. Guanylyltransferase that catalyzes the activation of (2S)-2-phospholactate (2-PL) as (2S)-lactyl-2-diphospho-5'-guanosine, via the condensation of 2-PL with GTP. It is involved in the biosynthesis of coenzyme F420, a hydride carrier cofactor. This chain is 2-phospho-L-lactate guanylyltransferase, found in Methanoculleus marisnigri (strain ATCC 35101 / DSM 1498 / JR1).